Reading from the N-terminus, the 332-residue chain is MQLETQDALYVALELAIAALSVAGNVLVCAAVGTSSALQTPTNYFLVSLAAADVAVGLFAIPFAITISLGFCTDFHSCLFLACFVLVLTQSSIFSLLAVAVDRYLAIRVPLRYKSLVTGTRARGVIAVLWVLAFGIGLTPFLGWNSKDSATNCTEPWDGTTNESCCLVKCLFENVVPMSYMVYFNFFGCVLPPLLIMLVIYIKIFMVACKQLQRTELVDHSRTVIQREIHAAKSLAMIVGIFALCWLPVHAINCVTLFQPARAKDKPKWAMNMAILLSHASSVVNPIVYAYRNRDFRYTFHKIISRYVLCQTDVLKSGNGQAGTQSALDVGL.

Over 1-8 the chain is Extracellular; it reads MQLETQDA. The helical transmembrane segment at 9–33 threads the bilayer; the sequence is LYVALELAIAALSVAGNVLVCAAVG. Residues 34–43 lie on the Cytoplasmic side of the membrane; that stretch reads TSSALQTPTN. The chain crosses the membrane as a helical span at residues 44-67; that stretch reads YFLVSLAAADVAVGLFAIPFAITI. At 68 to 78 the chain is on the extracellular side; it reads SLGFCTDFHSC. An intrachain disulfide couples Cys-78 to Cys-170. The chain crosses the membrane as a helical span at residues 79-101; that stretch reads LFLACFVLVLTQSSIFSLLAVAV. Residues 102-121 lie on the Cytoplasmic side of the membrane; the sequence is DRYLAIRVPLRYKSLVTGTR. Residues 122–144 form a helical membrane-spanning segment; that stretch reads ARGVIAVLWVLAFGIGLTPFLGW. Topologically, residues 145–177 are extracellular; the sequence is NSKDSATNCTEPWDGTTNESCCLVKCLFENVVP. Asn-152 and Asn-162 each carry an N-linked (GlcNAc...) asparagine glycan. Residue Glu-173 participates in adenosine binding. The helical transmembrane segment at 178-202 threads the bilayer; sequence MSYMVYFNFFGCVLPPLLIMLVIYI. At 203-234 the chain is on the cytoplasmic side; that stretch reads KIFMVACKQLQRTELVDHSRTVIQREIHAAKS. A helical transmembrane segment spans residues 235 to 258; that stretch reads LAMIVGIFALCWLPVHAINCVTLF. Residue Asn-253 coordinates adenosine. Over 259–266 the chain is Extracellular; it reads QPARAKDK. A helical membrane pass occupies residues 267-290; that stretch reads PKWAMNMAILLSHASSVVNPIVYA. Positions 278 and 279 each coordinate adenosine. The Cytoplasmic segment spans residues 291 to 332; the sequence is YRNRDFRYTFHKIISRYVLCQTDVLKSGNGQAGTQSALDVGL. Cys-310 is lipidated: S-palmitoyl cysteine.

This sequence belongs to the G-protein coupled receptor 1 family.

Its subcellular location is the cell membrane. Receptor for adenosine. The activity of this receptor is mediated by G proteins which activate adenylyl cyclase. This Canis lupus familiaris (Dog) protein is Adenosine receptor A2b (ADORA2B).